Consider the following 64-residue polypeptide: Large ribosomal subunit protein bL32 (64 aa).

The segment covering 1 to 15 (MAVPKRKVSKSRRDS) has biased composition (basic residues). Residues 1–21 (MAVPKRKVSKSRRDSRRAQTF) form a disordered region.

Belongs to the bacterial ribosomal protein bL32 family.

The protein is Large ribosomal subunit protein bL32 of Symbiobacterium thermophilum (strain DSM 24528 / JCM 14929 / IAM 14863 / T).